A 118-amino-acid chain; its full sequence is MARVKRGVIARKRHKKILKLAKGYYGARSRVFRVAKQAVIKAGQYAYRDRRQKKRQFRALWIARINAGARVNGLSYSRFIAGLKKASIEIDRKVLADLAVNEKAAFAAIVEKAKATLA.

Belongs to the bacterial ribosomal protein bL20 family.

In terms of biological role, binds directly to 23S ribosomal RNA and is necessary for the in vitro assembly process of the 50S ribosomal subunit. It is not involved in the protein synthesizing functions of that subunit. In Pseudomonas syringae pv. syringae (strain B728a), this protein is Large ribosomal subunit protein bL20.